We begin with the raw amino-acid sequence, 124 residues long: Ribonuclease pancreatic (124 aa).

The span at 1 to 13 shows a compositional bias: basic and acidic residues; the sequence is KETAAAKFERQHM. Positions 1–24 are disordered; the sequence is KETAAAKFERQHMDSSTSSASSSN. Residues K7 and R10 each coordinate substrate. Catalysis depends on H12, which acts as the Proton acceptor. 4 disulfides stabilise this stretch: C26/C84, C40/C95, C58/C110, and C65/C72. Substrate contacts are provided by residues 41-45, K66, and R85; that span reads KPVBT. H119 serves as the catalytic Proton donor.

The protein belongs to the pancreatic ribonuclease family. In terms of assembly, monomer. Interacts with and forms tight 1:1 complexes with RNH1. Dimerization of two such complexes may occur. Interaction with RNH1 inhibits this protein. In terms of tissue distribution, pancreas.

It is found in the secreted. It catalyses the reaction an [RNA] containing cytidine + H2O = an [RNA]-3'-cytidine-3'-phosphate + a 5'-hydroxy-ribonucleotide-3'-[RNA].. It carries out the reaction an [RNA] containing uridine + H2O = an [RNA]-3'-uridine-3'-phosphate + a 5'-hydroxy-ribonucleotide-3'-[RNA].. Its function is as follows. Endonuclease that catalyzes the cleavage of RNA on the 3' side of pyrimidine nucleotides. Acts on single-stranded and double-stranded RNA. This Boselaphus tragocamelus (Nilgai) protein is Ribonuclease pancreatic (RNASE1).